Consider the following 231-residue polypeptide: Octanoyltransferase (231 aa).

One can recognise a BPL/LPL catalytic domain in the interval 49-227 (PHLPEAVWLL…ALAARFHLAW (179 aa)). Residues 91 to 98 (RGGEVTHH), 158 to 160 (AIG), and 171 to 173 (GLA) contribute to the substrate site. Cys-189 functions as the Acyl-thioester intermediate in the catalytic mechanism.

Belongs to the LipB family.

The protein localises to the cytoplasm. The enzyme catalyses octanoyl-[ACP] + L-lysyl-[protein] = N(6)-octanoyl-L-lysyl-[protein] + holo-[ACP] + H(+). Its pathway is protein modification; protein lipoylation via endogenous pathway; protein N(6)-(lipoyl)lysine from octanoyl-[acyl-carrier-protein]: step 1/2. Its function is as follows. Catalyzes the transfer of endogenously produced octanoic acid from octanoyl-acyl-carrier-protein onto the lipoyl domains of lipoate-dependent enzymes. Lipoyl-ACP can also act as a substrate although octanoyl-ACP is likely to be the physiological substrate. The chain is Octanoyltransferase from Parasynechococcus marenigrum (strain WH8102).